The primary structure comprises 283 residues: MLRVAVPNKGTLSEPAAEILSEAGYRRRTDTKDLTVVDPANNVEFFFLRPKDIAIYVGSGQLDLGITGRDLAAESDAPVRERLALGFGSSTFRYAAPAGRDWAPEDLAGRRIATAFPNLVRKDLAGRGIEATVIRLDGAVEISVALGVADAIADVVGSGRTLGLHNLVAFGDSLCDSEAVLIERDGAGDENAAARDQLAARVQGVVFGQQYLMLDYDCPRHVLDRATEVTPGLESPTIAPLADQDWVAVRALVPRRDVNSIMDELAAIGAKAILASDIRFCRF.

Belongs to the ATP phosphoribosyltransferase family. Long subfamily. Equilibrium between an active dimeric form, an inactive hexameric form and higher aggregates. Interconversion between the various forms is largely reversible and is influenced by the natural substrates and inhibitors of the enzyme. It depends on Mg(2+) as a cofactor.

The protein resides in the cytoplasm. The catalysed reaction is 1-(5-phospho-beta-D-ribosyl)-ATP + diphosphate = 5-phospho-alpha-D-ribose 1-diphosphate + ATP. It functions in the pathway amino-acid biosynthesis; L-histidine biosynthesis; L-histidine from 5-phospho-alpha-D-ribose 1-diphosphate: step 1/9. Feedback inhibited by histidine. Functionally, catalyzes the condensation of ATP and 5-phosphoribose 1-diphosphate to form N'-(5'-phosphoribosyl)-ATP (PR-ATP). Has a crucial role in the pathway because the rate of histidine biosynthesis seems to be controlled primarily by regulation of HisG enzymatic activity. The chain is ATP phosphoribosyltransferase from Mycobacterium sp. (strain KMS).